Reading from the N-terminus, the 400-residue chain is Argininosuccinate synthase (400 aa).

8-16 (AYSGGLDTS) contacts ATP. Y87 contributes to the L-citrulline binding site. ATP is bound at residue G117. T119, N123, and D124 together coordinate L-aspartate. Residue N123 coordinates L-citrulline. L-citrulline is bound by residues R127, S175, E260, and Y272.

It belongs to the argininosuccinate synthase family. Type 1 subfamily. Homotetramer.

The protein localises to the cytoplasm. It catalyses the reaction L-citrulline + L-aspartate + ATP = 2-(N(omega)-L-arginino)succinate + AMP + diphosphate + H(+). Its pathway is amino-acid biosynthesis; L-arginine biosynthesis; L-arginine from L-ornithine and carbamoyl phosphate: step 2/3. The sequence is that of Argininosuccinate synthase from Nocardia farcinica (strain IFM 10152).